The following is a 177-amino-acid chain: Translation initiation factor IF-3 (177 aa).

The protein belongs to the IF-3 family. In terms of assembly, monomer.

It localises to the cytoplasm. IF-3 binds to the 30S ribosomal subunit and shifts the equilibrium between 70S ribosomes and their 50S and 30S subunits in favor of the free subunits, thus enhancing the availability of 30S subunits on which protein synthesis initiation begins. The polypeptide is Translation initiation factor IF-3 (Acaryochloris marina (strain MBIC 11017)).